We begin with the raw amino-acid sequence, 239 residues long: Orotidine 5'-phosphate decarboxylase (239 aa).

Substrate-binding positions include Asp12, Lys34, 61 to 70, Thr125, Arg188, Gln197, Gly217, and Arg218; that span reads DLKFHDIPNT. Catalysis depends on Lys63, which acts as the Proton donor.

This sequence belongs to the OMP decarboxylase family. Type 1 subfamily. Homodimer.

The catalysed reaction is orotidine 5'-phosphate + H(+) = UMP + CO2. It participates in pyrimidine metabolism; UMP biosynthesis via de novo pathway; UMP from orotate: step 2/2. In terms of biological role, catalyzes the decarboxylation of orotidine 5'-monophosphate (OMP) to uridine 5'-monophosphate (UMP). In Syntrophomonas wolfei subsp. wolfei (strain DSM 2245B / Goettingen), this protein is Orotidine 5'-phosphate decarboxylase.